The following is a 212-amino-acid chain: Probable octanoyltransferase (212 aa).

The region spanning 28–199 is the BPL/LPL catalytic domain; it reads GVSEEMILVT…NLETLLQRQE (172 aa). Substrate contacts are provided by residues 66 to 73, 130 to 132, and 143 to 145; these read RGGDATYH, SVG, and GVA. The Acyl-thioester intermediate role is filled by C161.

It belongs to the LipB family.

The protein localises to the cytoplasm. It catalyses the reaction octanoyl-[ACP] + L-lysyl-[protein] = N(6)-octanoyl-L-lysyl-[protein] + holo-[ACP] + H(+). It participates in protein modification; protein lipoylation via endogenous pathway; protein N(6)-(lipoyl)lysine from octanoyl-[acyl-carrier-protein]: step 1/2. In terms of biological role, catalyzes the transfer of endogenously produced octanoic acid from octanoyl-acyl-carrier-protein onto the lipoyl domains of lipoate-dependent enzymes. Lipoyl-ACP can also act as a substrate although octanoyl-ACP is likely to be the physiological substrate. This is Probable octanoyltransferase from Pyrobaculum arsenaticum (strain DSM 13514 / JCM 11321 / PZ6).